Reading from the N-terminus, the 70-residue chain is Large ribosomal subunit protein bL31 (70 aa).

Residues Cys16, Cys18, Cys37, and Cys40 each contribute to the Zn(2+) site.

The protein belongs to the bacterial ribosomal protein bL31 family. Type A subfamily. Part of the 50S ribosomal subunit. Zn(2+) is required as a cofactor.

Its function is as follows. Binds the 23S rRNA. The sequence is that of Large ribosomal subunit protein bL31 from Saccharophagus degradans (strain 2-40 / ATCC 43961 / DSM 17024).